A 159-amino-acid polypeptide reads, in one-letter code: MKKIIAMSLLMFSVVMSVNAKNTVASKKEEQIAQPIAGFRLFDLSGKAPQLIEGNKFSRAKPHQLCIFVENVEVKEQNLLAEYFVAPAPIRMQAENAETRTTEDGTGNLIIFNLPKANIASGAITQCWQFSKNDPVGTYQLELQFNDIVFKGLAFQILK.

The N-terminal stretch at 1–20 (MKKIIAMSLLMFSVVMSVNA) is a signal peptide.

This is an uncharacterized protein from Pasteurella multocida (strain Pm70).